A 162-amino-acid chain; its full sequence is MTEEIAGFQTSPKAQVQAAFEEIARRSMHDLSFLHPSMPVYVSDFTLFEGQWTGCVITPWMLSAVIFPGPDQLWPLRKVSEKIGLQLPYGTMTFTVGELDGVSQYLSCSLMSPLSHSMSIEEGQRLTDDCARMILSLPVTNPDVPHAGRRALLFGRRSGENA.

It belongs to the HupJ family.

The polypeptide is Hydrogenase-2 operon protein HybE (hybE) (Escherichia coli O6:H1 (strain CFT073 / ATCC 700928 / UPEC)).